The primary structure comprises 154 residues: 6,7-dimethyl-8-ribityllumazine synthase (154 aa).

5-amino-6-(D-ribitylamino)uracil contacts are provided by residues Phe22, 56-58, and 80-82; these read AFE and AVI. 85–86 contacts (2S)-2-hydroxy-3-oxobutyl phosphate; the sequence is ST. The active-site Proton donor is His88. Phe113 is a 5-amino-6-(D-ribitylamino)uracil binding site. Arg127 serves as a coordination point for (2S)-2-hydroxy-3-oxobutyl phosphate.

It belongs to the DMRL synthase family.

It carries out the reaction (2S)-2-hydroxy-3-oxobutyl phosphate + 5-amino-6-(D-ribitylamino)uracil = 6,7-dimethyl-8-(1-D-ribityl)lumazine + phosphate + 2 H2O + H(+). The protein operates within cofactor biosynthesis; riboflavin biosynthesis; riboflavin from 2-hydroxy-3-oxobutyl phosphate and 5-amino-6-(D-ribitylamino)uracil: step 1/2. Its function is as follows. Catalyzes the formation of 6,7-dimethyl-8-ribityllumazine by condensation of 5-amino-6-(D-ribitylamino)uracil with 3,4-dihydroxy-2-butanone 4-phosphate. This is the penultimate step in the biosynthesis of riboflavin. This Clostridium beijerinckii (strain ATCC 51743 / NCIMB 8052) (Clostridium acetobutylicum) protein is 6,7-dimethyl-8-ribityllumazine synthase.